Here is a 420-residue protein sequence, read N- to C-terminus: 5'-deoxyadenosine deaminase (420 aa).

Residues histidine 55 and histidine 57 each contribute to the Zn(2+) site. 2 residues coordinate substrate: glutamate 84 and histidine 176. Histidine 203 serves as a coordination point for Zn(2+). Substrate contacts are provided by glutamate 206 and aspartate 292. Aspartate 292 lines the Zn(2+) pocket.

It belongs to the metallo-dependent hydrolases superfamily. MTA/SAH deaminase family. Homotetramer. Zn(2+) serves as cofactor.

The enzyme catalyses 5'-deoxyadenosine + H2O + H(+) = 5'-deoxyinosine + NH4(+). It catalyses the reaction S-adenosyl-L-homocysteine + H2O + H(+) = S-inosyl-L-homocysteine + NH4(+). It carries out the reaction S-methyl-5'-thioadenosine + H2O + H(+) = S-methyl-5'-thioinosine + NH4(+). The catalysed reaction is adenosine + H2O + H(+) = inosine + NH4(+). It participates in amino-acid biosynthesis; S-adenosyl-L-methionine biosynthesis. In terms of biological role, catalyzes the deamination of three SAM-derived enzymatic products, namely 5'-deoxyadenosine, S-adenosyl-L-homocysteine, and 5'-methylthioadenosine, to produce the inosine analogs. Can also deaminate adenosine. The preferred substrate for this enzyme is 5'-deoxyadenosine, but all these substrates are efficiently deaminated. Likely functions in a S-adenosyl-L-methionine (SAM) recycling pathway from S-adenosyl-L-homocysteine (SAH) produced from SAM-dependent methylation reactions. May also be involved in the recycling of 5'-deoxyadenosine, whereupon the 5'-deoxyribose moiety of 5'-deoxyinosine is further metabolized to deoxyhexoses used for the biosynthesis of aromatic amino acids in methanogens. The sequence is that of 5'-deoxyadenosine deaminase from Methanocaldococcus jannaschii (strain ATCC 43067 / DSM 2661 / JAL-1 / JCM 10045 / NBRC 100440) (Methanococcus jannaschii).